Reading from the N-terminus, the 238-residue chain is Leucyl/phenylalanyl-tRNA--protein transferase (238 aa).

It belongs to the L/F-transferase family.

It localises to the cytoplasm. The enzyme catalyses N-terminal L-lysyl-[protein] + L-leucyl-tRNA(Leu) = N-terminal L-leucyl-L-lysyl-[protein] + tRNA(Leu) + H(+). The catalysed reaction is N-terminal L-arginyl-[protein] + L-leucyl-tRNA(Leu) = N-terminal L-leucyl-L-arginyl-[protein] + tRNA(Leu) + H(+). It carries out the reaction L-phenylalanyl-tRNA(Phe) + an N-terminal L-alpha-aminoacyl-[protein] = an N-terminal L-phenylalanyl-L-alpha-aminoacyl-[protein] + tRNA(Phe). Functionally, functions in the N-end rule pathway of protein degradation where it conjugates Leu, Phe and, less efficiently, Met from aminoacyl-tRNAs to the N-termini of proteins containing an N-terminal arginine or lysine. In Psychromonas ingrahamii (strain DSM 17664 / CCUG 51855 / 37), this protein is Leucyl/phenylalanyl-tRNA--protein transferase.